Consider the following 222-residue polypeptide: Eukaryotic translation initiation factor 3 subunit K (222 aa).

In terms of domain architecture, PCI spans 46-208 (YDLEANLAVL…KIKTKNITEK (163 aa)).

Belongs to the eIF-3 subunit K family. In terms of assembly, component of the eukaryotic translation initiation factor 3 (eIF-3) complex. The eIF-3 complex interacts with pix.

The protein localises to the cytoplasm. In terms of biological role, component of the eukaryotic translation initiation factor 3 (eIF-3) complex, which is involved in protein synthesis of a specialized repertoire of mRNAs and, together with other initiation factors, stimulates binding of mRNA and methionyl-tRNAi to the 40S ribosome. The eIF-3 complex specifically targets and initiates translation of a subset of mRNAs involved in cell proliferation. The sequence is that of Eukaryotic translation initiation factor 3 subunit K from Drosophila willistoni (Fruit fly).